The primary structure comprises 144 residues: Large ribosomal subunit protein uL16c (144 aa).

This sequence belongs to the universal ribosomal protein uL16 family. In terms of assembly, part of the 50S ribosomal subunit.

It localises to the plastid. Its subcellular location is the chloroplast. In Chara vulgaris (Common stonewort), this protein is Large ribosomal subunit protein uL16c.